The primary structure comprises 488 residues: Bifunctional protein HldE (488 aa).

Positions M1–A330 are ribokinase. N205–E208 contacts ATP. D275 is a catalytic residue. The interval F358 to A488 is cytidylyltransferase.

It in the N-terminal section; belongs to the carbohydrate kinase PfkB family. In the C-terminal section; belongs to the cytidylyltransferase family. As to quaternary structure, homodimer.

The enzyme catalyses D-glycero-beta-D-manno-heptose 7-phosphate + ATP = D-glycero-beta-D-manno-heptose 1,7-bisphosphate + ADP + H(+). It catalyses the reaction D-glycero-beta-D-manno-heptose 1-phosphate + ATP + H(+) = ADP-D-glycero-beta-D-manno-heptose + diphosphate. The protein operates within nucleotide-sugar biosynthesis; ADP-L-glycero-beta-D-manno-heptose biosynthesis; ADP-L-glycero-beta-D-manno-heptose from D-glycero-beta-D-manno-heptose 7-phosphate: step 1/4. It functions in the pathway nucleotide-sugar biosynthesis; ADP-L-glycero-beta-D-manno-heptose biosynthesis; ADP-L-glycero-beta-D-manno-heptose from D-glycero-beta-D-manno-heptose 7-phosphate: step 3/4. Functionally, catalyzes the phosphorylation of D-glycero-D-manno-heptose 7-phosphate at the C-1 position to selectively form D-glycero-beta-D-manno-heptose-1,7-bisphosphate. Catalyzes the ADP transfer from ATP to D-glycero-beta-D-manno-heptose 1-phosphate, yielding ADP-D-glycero-beta-D-manno-heptose. The polypeptide is Bifunctional protein HldE (Nitrobacter winogradskyi (strain ATCC 25391 / DSM 10237 / CIP 104748 / NCIMB 11846 / Nb-255)).